Here is a 160-residue protein sequence, read N- to C-terminus: SsrA-binding protein (160 aa).

It belongs to the SmpB family.

The protein localises to the cytoplasm. Required for rescue of stalled ribosomes mediated by trans-translation. Binds to transfer-messenger RNA (tmRNA), required for stable association of tmRNA with ribosomes. tmRNA and SmpB together mimic tRNA shape, replacing the anticodon stem-loop with SmpB. tmRNA is encoded by the ssrA gene; the 2 termini fold to resemble tRNA(Ala) and it encodes a 'tag peptide', a short internal open reading frame. During trans-translation Ala-aminoacylated tmRNA acts like a tRNA, entering the A-site of stalled ribosomes, displacing the stalled mRNA. The ribosome then switches to translate the ORF on the tmRNA; the nascent peptide is terminated with the 'tag peptide' encoded by the tmRNA and targeted for degradation. The ribosome is freed to recommence translation, which seems to be the essential function of trans-translation. The chain is SsrA-binding protein from Zymomonas mobilis subsp. mobilis (strain ATCC 31821 / ZM4 / CP4).